A 564-amino-acid polypeptide reads, in one-letter code: Bifunctional protein CrtB/UppS (564 aa).

Residue aspartate 329 is part of the active site. A Mg(2+)-binding site is contributed by aspartate 329. Substrate is bound by residues 330-333 (GNRR), tryptophan 334, histidine 346, and 374-376 (STE). Asparagine 377 functions as the Proton acceptor in the catalytic mechanism. Residues tryptophan 378, arginine 380, arginine 497, and 502–504 (RIS) each bind substrate. Glutamate 515 is a Mg(2+) binding site.

It in the N-terminal section; belongs to the phytoene/squalene synthase family. This sequence in the C-terminal section; belongs to the UPP synthase family. Homodimer. The cofactor is Mg(2+).

It catalyses the reaction 2 (2E,6E,10E)-geranylgeranyl diphosphate = 15-cis-phytoene + 2 diphosphate. It participates in carotenoid biosynthesis; phytoene biosynthesis; all-trans-phytoene from geranylgeranyl diphosphate: step 1/1. Catalyzes the reaction from prephytoene diphosphate to phytoene. Functionally, catalyzes the condensation of isopentenyl diphosphate (IPP) with allylic pyrophosphates generating different type of terpenoids. In Streptomyces coelicolor (strain ATCC BAA-471 / A3(2) / M145), this protein is Bifunctional protein CrtB/UppS (crtB/uppS3).